A 51-amino-acid polypeptide reads, in one-letter code: Large ribosomal subunit protein eL39 (51 aa).

The protein belongs to the eukaryotic ribosomal protein eL39 family.

The polypeptide is Large ribosomal subunit protein eL39 (rpl39e) (Pyrococcus horikoshii (strain ATCC 700860 / DSM 12428 / JCM 9974 / NBRC 100139 / OT-3)).